Consider the following 337-residue polypeptide: Anthranilate phosphoribosyltransferase (337 aa).

5-phospho-alpha-D-ribose 1-diphosphate contacts are provided by residues Gly-81, 84–85 (GD), Ser-89, 91–94 (NVST), 109–117 (KHGNRAATS), and Ala-121. Anthranilate is bound at residue Gly-81. Ser-93 contributes to the Mg(2+) binding site. Asn-112 is a binding site for anthranilate. Position 167 (Arg-167) interacts with anthranilate. Residues Asp-226 and Glu-227 each contribute to the Mg(2+) site.

Belongs to the anthranilate phosphoribosyltransferase family. Homodimer. Mg(2+) serves as cofactor.

It carries out the reaction N-(5-phospho-beta-D-ribosyl)anthranilate + diphosphate = 5-phospho-alpha-D-ribose 1-diphosphate + anthranilate. It functions in the pathway amino-acid biosynthesis; L-tryptophan biosynthesis; L-tryptophan from chorismate: step 2/5. In terms of biological role, catalyzes the transfer of the phosphoribosyl group of 5-phosphorylribose-1-pyrophosphate (PRPP) to anthranilate to yield N-(5'-phosphoribosyl)-anthranilate (PRA). The polypeptide is Anthranilate phosphoribosyltransferase (Methylorubrum extorquens (strain CM4 / NCIMB 13688) (Methylobacterium extorquens)).